The primary structure comprises 244 residues: Chalcone--flavanone isomerase (244 aa).

Substrate-binding residues include T57, N122, and S199.

It belongs to the chalcone isomerase family.

It carries out the reaction a chalcone = a flavanone.. Its pathway is secondary metabolite biosynthesis; flavonoid biosynthesis. Catalyzes the intramolecular cyclization of bicyclic chalcones into tricyclic (S)-flavanones. Responsible for the isomerization of 4,2',4',6'-tetrahydroxychalcone (also termed chalcone) into naringenin. This chain is Chalcone--flavanone isomerase (CHI), found in Arabidopsis lyrata subsp. petraea (Northern rock-cress).